Consider the following 120-residue polypeptide: Glycine cleavage system H protein (120 aa).

One can recognise a Lipoyl-binding domain in the interval 17 to 99 (VATVGITTYA…QGAGWFFKLK (83 aa)). The residue at position 58 (K58) is an N6-lipoyllysine.

It belongs to the GcvH family. As to quaternary structure, the glycine cleavage system is composed of four proteins: P, T, L and H. The cofactor is (R)-lipoate.

Functionally, the glycine cleavage system catalyzes the degradation of glycine. The H protein shuttles the methylamine group of glycine from the P protein to the T protein. This Rhizobium etli (strain CIAT 652) protein is Glycine cleavage system H protein.